The chain runs to 180 residues: Shikimate kinase (180 aa).

ATP is bound at residue 14–19 (GAGKSC). Mg(2+) is bound at residue Ser18. Substrate contacts are provided by Asp36, Arg60, and Gly82. Arg120 provides a ligand contact to ATP. Arg139 provides a ligand contact to substrate.

Belongs to the shikimate kinase family. In terms of assembly, monomer. It depends on Mg(2+) as a cofactor.

Its subcellular location is the cytoplasm. It catalyses the reaction shikimate + ATP = 3-phosphoshikimate + ADP + H(+). It functions in the pathway metabolic intermediate biosynthesis; chorismate biosynthesis; chorismate from D-erythrose 4-phosphate and phosphoenolpyruvate: step 5/7. In terms of biological role, catalyzes the specific phosphorylation of the 3-hydroxyl group of shikimic acid using ATP as a cosubstrate. This chain is Shikimate kinase, found in Xanthomonas euvesicatoria pv. vesicatoria (strain 85-10) (Xanthomonas campestris pv. vesicatoria).